A 622-amino-acid polypeptide reads, in one-letter code: MSFSTINSNVNKTTGDSNNNTTENSSTADLLGMDLLQSGPRLMNTMQPNNSSDMLHINNKTNNVQQPAGNTNISSANAGAKAPANEFVRKLFRILENNEYPDIVTWTENGKSFVVLDTGKFTTHILPNHFKHSNFASFVRQLNKYDFHKVKRSPEERQRCKYGEQSWEFQHPEFRVHYGKGLDNIKRKIPAQRKVLLDESQKALLHFNSEGTNPNNPSGSLLNESTTELLLSNTVSKDAFGNLRRRVDKLQKELDMSKMESYATKVELQKLNSKYNTVIESLITFKTINENLLNNFNTLCSTLANNGIEVPIFGDNGNRNPTGNTNPATTTAIQSNNNTNNASPATSTVSLQLPNLPDQNSLTPNAQNNTVTLRKGFHVLLVEDDAVSIQLCSKFLRKYGCTVQVVSDGLSAISTLEKYRYDLVLMDIVMPNLDGATATSIVRSFDNETPIIAMTGNIMNQDLITYLQHGMNDILAKPFTRDDLHSILIRYLKDRIPLCEQQLPPRNSSPQTHSNTNTANSNPNTINEQSLAMLPQDNPSTTTPVTPGASISSAQHVQQGQQEQQHQIFHAQQQQQHHNAIANARSDVAIPNLEHEINTVPHSSMGSTPQLPQSTLQENQLS.

Residues 1–12 (MSFSTINSNVNK) are compositionally biased toward polar residues. Positions 1–29 (MSFSTINSNVNKTTGDSNNNTTENSSTAD) are disordered. Residues 13–27 (TTGDSNNNTTENSST) show a composition bias toward low complexity. The DNA-binding domain stretch occupies residues 84 to 190 (ANEFVRKLFR…GLDNIKRKIP (107 aa)). The interval 212–303 (TNPNNPSGSL…NNFNTLCSTL (92 aa)) is hydrophobic repeat HR-A/B. Positions 240–260 (FGNLRRRVDKLQKELDMSKME) form a coiled coil. Positions 378 to 492 (HVLLVEDDAV…DLHSILIRYL (115 aa)) constitute a Response regulatory domain. Aspartate 427 is modified (4-aspartylphosphate). 2 disordered regions span residues 501-579 (QQLP…QHHN) and 599-622 (TVPHSSMGSTPQLPQSTLQENQLS). The segment covering 512–527 (THSNTNTANSNPNTIN) has biased composition (low complexity). A compositionally biased stretch (polar residues) spans 537–554 (DNPSTTTPVTPGASISSA). The segment covering 555–578 (QHVQQGQQEQQHQIFHAQQQQQHH) has biased composition (low complexity). A compositionally biased stretch (polar residues) spans 600–622 (VPHSSMGSTPQLPQSTLQENQLS).

The protein belongs to the SKN7 family. As to quaternary structure, homotrimer. The phosphorelay mechanism involves the sequential transfer of a phosphate group from 'His-576' (H1) to 'Asp-1144' (D1) of SLN1, then to 'His-64' (H2) of YPD1 and finally to Asp-427 (D2) of SKN7.

It localises to the nucleus. Functionally, transcription factor that is part of a SLN1-YPD1-SKN7 two-component regulatory system, which controls gene expression in response to changes in the osmolarity of the extracellular environment. Under low osmotic conditions, phosphorylated and activated by the phosphorelay intermediate protein YPD1. Also activated in response to oxidative stress, independent on the two-component regulatory system. Regulates heat shock genes in response to oxidative stress and genes involved in cell wall integrity in response to osmotic changes. The protein is Transcription factor SKN7 (SKN7) of Saccharomyces cerevisiae (strain ATCC 204508 / S288c) (Baker's yeast).